A 355-amino-acid chain; its full sequence is MKLETTYKSNNYPIIVEHQAIDHLHQFIKDYEDVVLVVDEHVNHDWHELLDFITSENNAHKLIIPSGETTKTLSFYEKTIESLLAKQLTRDTCLIAIGGGATGDFTGFLAATLLRGVDFIQVPTTILAHDSSVGGKVGINSKHGKNLIGAFYRPKAVIYDLNFLETLPYTEILSGYAEVYKHALLNDITSVNNIEAQYPNEQALASLKDIEYFLYKGIETKLNIIVQDEKESNVRKYLNLGHTFGHAVEYQFKIPHGHAVMIGIIYQFIVSNIILNTHYDISHYIQYLKSLNYPLEVIQSFEFNSLYGLMLKDKKNDQQGVQMVLLNAIGDPQVKHVDKATLSQAFEIFTTHFEK.

Residues 66–71 (SGETTK), 100–104 (GATGD), 124–125 (TT), Lys136, Lys145, and 163–166 (FLET) contribute to the NAD(+) site. Positions 178, 242, and 256 each coordinate Zn(2+).

The protein belongs to the sugar phosphate cyclases superfamily. Dehydroquinate synthase family. Requires Co(2+) as cofactor. Zn(2+) serves as cofactor. NAD(+) is required as a cofactor.

The protein localises to the cytoplasm. It catalyses the reaction 7-phospho-2-dehydro-3-deoxy-D-arabino-heptonate = 3-dehydroquinate + phosphate. It functions in the pathway metabolic intermediate biosynthesis; chorismate biosynthesis; chorismate from D-erythrose 4-phosphate and phosphoenolpyruvate: step 2/7. Functionally, catalyzes the conversion of 3-deoxy-D-arabino-heptulosonate 7-phosphate (DAHP) to dehydroquinate (DHQ). This is 3-dehydroquinate synthase from Staphylococcus saprophyticus subsp. saprophyticus (strain ATCC 15305 / DSM 20229 / NCIMB 8711 / NCTC 7292 / S-41).